A 185-amino-acid polypeptide reads, in one-letter code: MEPPQCVEELEDDVFQSEDGEPGTQPGGLLSADLFAQSQLDCPLSRLQLFPLTHCCGPGLRPISQEDKATQTLSPASPSQGVMLPCGVTEEPQRLFYGNAGYRLPLPASFPAGSPLGEQPPEGQFLQHRAEVQIARKLQCIADQFHRLHTQQHQQNRDRAWWQVFLFLQNLALNRQENREGVGPW.

The interval 1–28 (MEPPQCVEELEDDVFQSEDGEPGTQPGG) is disordered. The segment covering 8-21 (EELEDDVFQSEDGE) has biased composition (acidic residues). The interval 67 to 75 (DKATQTLSP) is interaction with DLC2. Residues 134–148 (IARKLQCIADQFHRL) carry the BH3 motif.

The protein belongs to the Bcl-2 family. Interacts with MCL1, BCL2, BCL2L1/BCL-Xl, BCL2A1 and BCL2L2/BCL-w. Interacts with the myosin V actin motor complex through its binding to DLC2. In terms of tissue distribution, widely expressed with an abundant expression in pancreas, liver kidney and hematopoietic tissues.

May play a role in apoptosis. In Mus musculus (Mouse), this protein is Bcl-2-modifying factor (Bmf).